We begin with the raw amino-acid sequence, 265 residues long: Imidazole glycerol phosphate synthase subunit HisF (265 aa).

Active-site residues include Asp11 and Asp130.

The protein belongs to the HisA/HisF family. Heterodimer of HisH and HisF.

It localises to the cytoplasm. It catalyses the reaction 5-[(5-phospho-1-deoxy-D-ribulos-1-ylimino)methylamino]-1-(5-phospho-beta-D-ribosyl)imidazole-4-carboxamide + L-glutamine = D-erythro-1-(imidazol-4-yl)glycerol 3-phosphate + 5-amino-1-(5-phospho-beta-D-ribosyl)imidazole-4-carboxamide + L-glutamate + H(+). The protein operates within amino-acid biosynthesis; L-histidine biosynthesis; L-histidine from 5-phospho-alpha-D-ribose 1-diphosphate: step 5/9. Its function is as follows. IGPS catalyzes the conversion of PRFAR and glutamine to IGP, AICAR and glutamate. The HisF subunit catalyzes the cyclization activity that produces IGP and AICAR from PRFAR using the ammonia provided by the HisH subunit. The sequence is that of Imidazole glycerol phosphate synthase subunit HisF from Idiomarina loihiensis (strain ATCC BAA-735 / DSM 15497 / L2-TR).